The primary structure comprises 433 residues: Evolutionarily conserved signaling intermediate in Toll pathway, mitochondrial (433 aa).

The transit peptide at 1-48 directs the protein to the mitochondrion; that stretch reads MSWAQAILLARGASRGWGGICSTALTGAPFSQVPPQAPRGLRCSAAAH. The segment at 36-63 is disordered; it reads QAPRGLRCSAAAHNPDSSLVPHPPEPPR. Residue K372 forms a Glycyl lysine isopeptide (Lys-Gly) (interchain with G-Cter in ubiquitin) linkage. Positions 397–433 are disordered; that stretch reads SGELLPSSSELEEPPPPPPEGQEEEEDSQQRQQQGQS.

Belongs to the ECSIT family. Interacts with MAP3K1, SMAD4 and TRAF6. Interacts with SMAD1 only after BMP4-treatment. Part of the mitochondrial complex I assembly/MCIA complex that comprises at least the core subunits TMEM126B, NDUFAF1, ECSIT and ACAD9 and complement subunits such as COA1 and TMEM186. Interacts with NDUFAF1. Interacts with ACAD9. Interacts with TRIM59. Interacts with TMEM70 and TMEM242. Interacts (when ubiquitinated) with NF-kappa-B subunits RELA and NFKB1. Interacts with RIGI, IFIT1 and MAVS; these interactions promote RLR-mediated type I IFN induction. Interacts with SQSTM1; this interaction inhibits TLR4 signaling via functional regulation of the TRAF6-ECSIT complex. Interacts with cereblon/CRBN; this interaction inhibits the ubiquitination of ECSIT. Ubiquitinated on Lys-372; leading to translocation in the nucleus together with RELA and NFKB1 and expression of NF-kappa-B-dependent genes.

It is found in the cytoplasm. The protein localises to the nucleus. The protein resides in the mitochondrion. Adapter protein that plays a role in different signaling pathways including TLRs and IL-1 pathways or innate antiviral induction signaling. Plays a role in the activation of NF-kappa-B by forming a signal complex with TRAF6 and TAK1/MAP3K7 to activate TAK1/MAP3K7 leading to activation of IKKs. Once ubiquitinated, interacts with the dissociated RELA and NFKB1 proteins and translocates to the nucleus where it induces NF-kappa-B-dependent gene expression. Plays a role in innate antiviral immune response by bridging the pattern recognition receptors RIGI and MDA5/IFIT1 to the MAVS complex at the mitochondrion. Promotes proteolytic activation of MAP3K1. Involved in the BMP signaling pathway. Required for normal embryonic development. Functionally, as part of the MCIA complex, involved in the assembly of the mitochondrial complex I. The chain is Evolutionarily conserved signaling intermediate in Toll pathway, mitochondrial from Bos taurus (Bovine).